The sequence spans 306 residues: Homoserine kinase (306 aa).

Residue Pro-91–Ala-101 participates in ATP binding.

This sequence belongs to the GHMP kinase family. Homoserine kinase subfamily.

It is found in the cytoplasm. It catalyses the reaction L-homoserine + ATP = O-phospho-L-homoserine + ADP + H(+). Its pathway is amino-acid biosynthesis; L-threonine biosynthesis; L-threonine from L-aspartate: step 4/5. Its function is as follows. Catalyzes the ATP-dependent phosphorylation of L-homoserine to L-homoserine phosphate. In Bacillus licheniformis (strain ATCC 14580 / DSM 13 / JCM 2505 / CCUG 7422 / NBRC 12200 / NCIMB 9375 / NCTC 10341 / NRRL NRS-1264 / Gibson 46), this protein is Homoserine kinase.